A 212-amino-acid chain; its full sequence is Protein-L-isoaspartate O-methyltransferase (212 aa).

Serine 60 is a catalytic residue.

This sequence belongs to the methyltransferase superfamily. L-isoaspartyl/D-aspartyl protein methyltransferase family.

Its subcellular location is the cytoplasm. It carries out the reaction [protein]-L-isoaspartate + S-adenosyl-L-methionine = [protein]-L-isoaspartate alpha-methyl ester + S-adenosyl-L-homocysteine. Catalyzes the methyl esterification of L-isoaspartyl residues in peptides and proteins that result from spontaneous decomposition of normal L-aspartyl and L-asparaginyl residues. It plays a role in the repair and/or degradation of damaged proteins. The sequence is that of Protein-L-isoaspartate O-methyltransferase from Methanococcus maripaludis (strain DSM 14266 / JCM 13030 / NBRC 101832 / S2 / LL).